Consider the following 276-residue polypeptide: Diaminopimelate epimerase (276 aa).

Substrate contacts are provided by Asn13, Gln46, and Asn66. Catalysis depends on Cys75, which acts as the Proton donor. Substrate is bound by residues 76–77 (GN), Asn159, Asn192, and 210–211 (ER). Cys219 acts as the Proton acceptor in catalysis. 220–221 (GT) is a binding site for substrate.

Belongs to the diaminopimelate epimerase family. As to quaternary structure, homodimer.

It is found in the cytoplasm. It carries out the reaction (2S,6S)-2,6-diaminopimelate = meso-2,6-diaminopimelate. It functions in the pathway amino-acid biosynthesis; L-lysine biosynthesis via DAP pathway; DL-2,6-diaminopimelate from LL-2,6-diaminopimelate: step 1/1. Catalyzes the stereoinversion of LL-2,6-diaminopimelate (L,L-DAP) to meso-diaminopimelate (meso-DAP), a precursor of L-lysine and an essential component of the bacterial peptidoglycan. This chain is Diaminopimelate epimerase, found in Pseudomonas syringae pv. tomato (strain ATCC BAA-871 / DC3000).